Here is a 232-residue protein sequence, read N- to C-terminus: Large ribosomal subunit protein uL1 (232 aa).

The protein belongs to the universal ribosomal protein uL1 family. In terms of assembly, part of the 50S ribosomal subunit.

In terms of biological role, binds directly to 23S rRNA. The L1 stalk is quite mobile in the ribosome, and is involved in E site tRNA release. Its function is as follows. Protein L1 is also a translational repressor protein, it controls the translation of the L11 operon by binding to its mRNA. This is Large ribosomal subunit protein uL1 from Xanthomonas oryzae pv. oryzae (strain KACC10331 / KXO85).